We begin with the raw amino-acid sequence, 364 residues long: MSLPRFDPAEYETQLAAKIARFKSDFAPLDLPEPEVFRSEPLHYRLRAEFRIWHSEGRLDYAMFDPADPKRPVLIDGFPAAAAPIAAAMPVLRERVMASEPLRRKLFQVEFLATLSGELMISLVYHRPLEADWEAAARELAAAMGVQLIGRSRKQKIVLERDWVLESFELDGRTLHYQQIEGSFSQPNGGVNRQMLVWARRQAEGSGADLLELYCGNGNFTVALAPLFGKVLATEMSKSSVRAAHYNLAANAVDNVTMVRMASEEISDALAGGRAYRRMQGIDLAGYRFGTLFVDPPRSGLDEATVALARRFDRILYISCNPQTLHDNIAALRDTHGIAAAAAFDQFPYTHHLECGVLLQKTAA.

Residues glutamine 186, tyrosine 214, asparagine 219, glutamate 235, and aspartate 295 each contribute to the S-adenosyl-L-methionine site. The Nucleophile role is filled by cysteine 320. Catalysis depends on glutamate 354, which acts as the Proton acceptor.

Belongs to the class I-like SAM-binding methyltransferase superfamily. RNA M5U methyltransferase family. TrmA subfamily.

The enzyme catalyses uridine(54) in tRNA + S-adenosyl-L-methionine = 5-methyluridine(54) in tRNA + S-adenosyl-L-homocysteine + H(+). It carries out the reaction uridine(341) in tmRNA + S-adenosyl-L-methionine = 5-methyluridine(341) in tmRNA + S-adenosyl-L-homocysteine + H(+). Its function is as follows. Dual-specificity methyltransferase that catalyzes the formation of 5-methyluridine at position 54 (m5U54) in all tRNAs, and that of position 341 (m5U341) in tmRNA (transfer-mRNA). In Azoarcus sp. (strain BH72), this protein is tRNA/tmRNA (uracil-C(5))-methyltransferase.